We begin with the raw amino-acid sequence, 793 residues long: Protein smoothened (793 aa).

Positions 1-32 (MAAGRPVRGPELAPRRLLQLLLLVLLGGPGRG) are cleaved as a signal peptide. Topologically, residues 33–237 (AALSGNVTGP…EAEHQDMHSY (205 aa)) are extracellular. The segment at 35-61 (LSGNVTGPGPHSASGSSRRDVPVTSPP) is disordered. N38 carries N-linked (GlcNAc...) asparagine glycosylation. Intrachain disulfides connect C68/C182, C74/C138, C82/C131, C122/C158, and C151/C173. Residues 69 to 185 (GRAAHCEPLR…DHFPEGCPNE (117 aa)) enclose the FZ domain. Cholesterol is bound at residue D99. N192 carries an N-linked (GlcNAc...) asparagine glycan. Intrachain disulfides connect C197-C217, C221-C299, and C318-C394. Residues 238 to 258 (IAAFGAVTGLCTLFTLATFVA) traverse the membrane as a helical segment. Over 259–265 (DWRNSNR) the chain is Cytoplasmic. Residues 266-286 (YPAVILFYVNACFFVGSIGWL) form a helical membrane-spanning segment. At 287-318 (AQFMDGARREIVCRADGTMRFGEPTSSETLSC) the chain is on the extracellular side. Residues 319–339 (VIIFVIVYYALMAGVVWFVVL) form a helical membrane-spanning segment. The Cytoplasmic portion of the chain corresponds to 340-362 (TYAWHTSFKALGTTYQPLSGKTS). The helical transmembrane segment at 363–383 (YFHLLTWSLPFVLTVAILAVA) threads the bilayer. The Extracellular portion of the chain corresponds to 384–406 (QVDGDSVSGICFVGYKNYRYRAG). Y398 contacts cholesterol. Residues 407–427 (FVLAPIGLVLIVGGYFLIRGV) traverse the membrane as a helical segment. Residues 428–455 (MTLFSIKSNHPGLLSEKAASKINETMLR) are Cytoplasmic-facing. Residues 456 to 476 (LGIFGFLAFGFVLITFSCHFY) traverse the membrane as a helical segment. The Extracellular portion of the chain corresponds to 477–528 (DFFNQAEWERSFRDYVLCQANVTIGLPTKKPIPDCEIKNRPSLLVEKINLFA). A disulfide bridge links C494 with C511. N497 carries an N-linked (GlcNAc...) asparagine glycan. Residues 529-549 (MFGTGIAMSTWVWTKATLLIW) traverse the membrane as a helical segment. Positions 542–573 (TKATLLIWRRTWCRLTGHSDDEPKRIKKSKMI) are interaction with BBS5 and BBS7. The Cytoplasmic portion of the chain corresponds to 550 to 793 (RRTWCRLTGH…AEILDADSDF (244 aa)). Residues S560, S578, and S594 each carry the phosphoserine modification. The tract at residues 574-657 (AKAFSKRREL…TPVPPEEQAN (84 aa)) is required for interaction with PRKACA. Residues 585–597 (QNPGQELSFSMHT) form an interaction with DLG5 region. At T597 the chain carries Phosphothreonine. A phosphoserine mark is found at S599 and S642. Phosphothreonine occurs at positions 644 and 648. A Phosphoserine modification is found at S666. Positions 674–684 (GRKKKRRKRKK) are enriched in basic residues. The disordered stretch occupies residues 674–703 (GRKKKRRKRKKEVCPLRPAPELHHSAPVPA).

The protein belongs to the G-protein coupled receptor Fz/Smo family. In terms of assembly, homodimer. Interacts (via C-terminus) with protein kinase A catalytic subunit PRKACA; interacts with free PRKACA subunits and the interaction leads to sequestration of PRKACA at the membrane, preventing PRKACA-mediated phosphorylation of GLI transcription factors. Interacts with ARRB2. Interacts with BBS5 and BBS7; the interactions are indicative for the association of SMO with the BBsome complex to facilitate ciliary localization of SMO. Interacts with KIF7, DLG5 and SDCBP. Interacts with GAS8/DRC4. Phosphorylation by GRK kinases is required for interaction with protein kinase A catalytic subunit PRKACA. In terms of tissue distribution, during early somite stages of embryonic development, modestly up-regulated in the cells of the node (at protein level).

Its subcellular location is the cell membrane. The protein localises to the cell projection. The protein resides in the cilium. In terms of biological role, g protein-coupled receptor which associates with the patched protein (PTCH) to transduce hedgehog protein signaling. Binding of sonic hedgehog (SHH) to its receptor patched prevents inhibition of smoothened (SMO) by patched. When active, SMO binds to and sequesters protein kinase A catalytic subunit PRKACA at the cell membrane, preventing PRKACA-mediated phosphorylation of GLI transcription factors which releases the GLI proteins from PRKACA-mediated inhibition and allows for transcriptional activation of hedgehog pathway target genes. Required for the accumulation of KIF7, GLI2 and GLI3 in the cilia. Interacts with DLG5 at the ciliary base to induce the accumulation of KIF7 and GLI2 at the ciliary tip for GLI2 activation. This is Protein smoothened (Smo) from Mus musculus (Mouse).